We begin with the raw amino-acid sequence, 340 residues long: Annexin A2-A (340 aa).

The P10 binding site stretch occupies residues 2–25 (ALIHEILGKLSLEGNQSCARQSAL). Annexin repeat units follow at residues 34-105 (FDAE…GLIK), 106-177 (TRPQ…ALAK), 190-262 (EKID…NLVQ), and 266-337 (NKPL…NLCG).

The protein belongs to the annexin family. As to quaternary structure, tetramer of 2 light chains (p10 proteins) and 2 heavy chains (p36 proteins).

Its subcellular location is the secreted. It localises to the extracellular space. The protein localises to the extracellular matrix. The protein resides in the basement membrane. Calcium-regulated membrane-binding protein whose affinity for calcium is greatly enhanced by anionic phospholipids. It binds two calcium ions with high affinity. The sequence is that of Annexin A2-A (anxa2-a) from Xenopus laevis (African clawed frog).